Consider the following 788-residue polypeptide: 5-methyltetrahydropteroyltriglutamate--homocysteine methyltransferase (788 aa).

5-methyltetrahydropteroyltri-L-glutamate contacts are provided by residues 24 to 27 (RELK) and Lys-140. Residues 463–465 (IGS) and Glu-516 contribute to the L-homocysteine site. L-methionine-binding positions include 463–465 (IGS) and Glu-516. Residues 547–548 (RC) and Trp-593 contribute to the 5-methyltetrahydropteroyltri-L-glutamate site. An L-homocysteine-binding site is contributed by Asp-631. Position 631 (Asp-631) interacts with L-methionine. Glu-637 serves as a coordination point for 5-methyltetrahydropteroyltri-L-glutamate. His-673, Cys-675, and Glu-697 together coordinate Zn(2+). His-726 serves as the catalytic Proton donor. Cys-758 is a binding site for Zn(2+).

It belongs to the vitamin-B12 independent methionine synthase family. Requires Zn(2+) as cofactor.

It catalyses the reaction 5-methyltetrahydropteroyltri-L-glutamate + L-homocysteine = tetrahydropteroyltri-L-glutamate + L-methionine. Its pathway is amino-acid biosynthesis; L-methionine biosynthesis via de novo pathway; L-methionine from L-homocysteine (MetE route): step 1/1. Its function is as follows. Catalyzes the transfer of a methyl group from 5-methyltetrahydrofolate to homocysteine resulting in methionine formation. The chain is 5-methyltetrahydropteroyltriglutamate--homocysteine methyltransferase from Rhodopseudomonas palustris (strain ATCC BAA-98 / CGA009).